Consider the following 269-residue polypeptide: Eukaryotic translation initiation factor 3 subunit G-1 (269 aa).

An RRM domain is found at 188–266 (AAIRISNLSE…LILSVEWSKP (79 aa)).

The protein belongs to the eIF-3 subunit G family. Component of the eukaryotic translation initiation factor 3 (eIF-3) complex. The eIF-3 complex interacts with pix.

The protein resides in the cytoplasm. In terms of biological role, RNA-binding component of the eukaryotic translation initiation factor 3 (eIF-3) complex, which is involved in protein synthesis of a specialized repertoire of mRNAs and, together with other initiation factors, stimulates binding of mRNA and methionyl-tRNAi to the 40S ribosome. The eIF-3 complex specifically targets and initiates translation of a subset of mRNAs involved in cell proliferation. This subunit can bind 18S rRNA. The sequence is that of Eukaryotic translation initiation factor 3 subunit G-1 from Drosophila virilis (Fruit fly).